Here is a 590-residue protein sequence, read N- to C-terminus: MGFRLITQLKGMSVLLVLFPTLLLVMLTGAQRACPKNCRCDGKIVYCESHAFADIPENISGGSQGLSLRFNSIQKLKSNQFAGLNQLIWLYLDHNYISSVDEDAFQGIRRLKELILSSNKITYLHNKTFHPVPNLRNLDLSYNKLQTLQSEQFKGLRKLIILHLRSNSLKTVPIRVFQDCRNLDFLDLGYNRLRSLSRNAFAGLLKLKELHLEHNQFSKINFAHFPRLFNLRSIYLQWNRIRSVSQGLTWTWSSLHTLDLSGNDIQAIEPGTFKCLPNLQKLNLDSNKLTNVSQETVNAWISLISITLSGNMWECSRSICPLFYWLKNFKGNKESTMICAGPKHIQGEKVSDAVETYNICSDVQVVNTERSHLAPQTPQKPPFFPKPTIFKSDAIPATLEAVSPSPGFQIPGTDHEYEHVSFHKIIAGSVALFLSVAMILLVIYVSWKRYPASMKQLQQHSLMKRRRKKARESERQMNSPLQEYYVDYKPTNSETMDISVNGSGPCTYTISGSRECEMPHHVKPLPYYSYDQPVIGYCQAHQPLHINKAYEAVSIEQDDSPSLELGRDHSFIATIARSAAPAIYLERITN.

The first 30 residues, 1–30 (MGFRLITQLKGMSVLLVLFPTLLLVMLTGA), serve as a signal peptide directing secretion. The 29-residue stretch at 31 to 59 (QRACPKNCRCDGKIVYCESHAFADIPENI) folds into the LRRNT domain. At 31–424 (QRACPKNCRC…HEYEHVSFHK (394 aa)) the chain is on the extracellular side. Residue asparagine 58 is glycosylated (N-linked (GlcNAc...) asparagine). 10 LRR repeats span residues 60–83 (SGGS…QFAG), 84–107 (LNQL…AFQG), 108–131 (IRRL…TFHP), 132–155 (VPNL…QFKG), 157–179 (RKLI…VFQD), 180–203 (CRNL…AFAG), 205–227 (LKLK…HFPR), 228–251 (LFNL…LTWT), 252–275 (WSSL…TFKC), and 276–299 (LPNL…TVNA). N-linked (GlcNAc...) asparagine glycosylation occurs at asparagine 126. The N-linked (GlcNAc...) asparagine glycan is linked to asparagine 291. One can recognise an LRRCT domain in the interval 311–362 (NMWECSRSICPLFYWLKNFKGNKESTMICAGPKHIQGEKVSDAVETYNICSD). Residues 425-445 (IIAGSVALFLSVAMILLVIYV) traverse the membrane as a helical segment. Residues 446–590 (SWKRYPASMK…PAIYLERITN (145 aa)) are Cytoplasmic-facing.

The protein belongs to the LRRTM family. As to quaternary structure, peripherally associated with AMPAR complex. AMPAR complex consists of an inner core made of 4 pore-forming GluA/GRIA proteins (GRIA1, GRIA2, GRIA3 and GRIA4) and 4 major auxiliary subunits arranged in a twofold symmetry. One of the two pairs of distinct binding sites is occupied either by CNIH2, CNIH3 or CACNG2, CACNG3. The other harbors CACNG2, CACNG3, CACNG4, CACNG8 or GSG1L. This inner core of AMPAR complex is complemented by outer core constituents binding directly to the GluA/GRIA proteins at sites distinct from the interaction sites of the inner core constituents. Outer core constituents include at least PRRT1, PRRT2, CKAMP44/SHISA9, FRRS1L and NRN1. The proteins of the inner and outer core serve as a platform for other, more peripherally associated AMPAR constituents, including LRRTM4. Alone or in combination, these auxiliary subunits control the gating and pharmacology of the AMPAR complex and profoundly impact their biogenesis and protein processing. As to expression, expressed in the brain (at protein level).

The protein resides in the cell membrane. It localises to the postsynaptic cell membrane. Functionally, may play a role in the development and maintenance of the nervous system. Exhibits strong synaptogenic activity, restricted to excitatory presynaptic differentiation. In Rattus norvegicus (Rat), this protein is Leucine-rich repeat transmembrane neuronal protein 4 (Lrrtm4).